The following is an 89-amino-acid chain: Small ribosomal subunit protein uS15 (89 aa).

This sequence belongs to the universal ribosomal protein uS15 family. As to quaternary structure, part of the 30S ribosomal subunit. Forms a bridge to the 50S subunit in the 70S ribosome, contacting the 23S rRNA.

Its function is as follows. One of the primary rRNA binding proteins, it binds directly to 16S rRNA where it helps nucleate assembly of the platform of the 30S subunit by binding and bridging several RNA helices of the 16S rRNA. Functionally, forms an intersubunit bridge (bridge B4) with the 23S rRNA of the 50S subunit in the ribosome. The protein is Small ribosomal subunit protein uS15 of Limosilactobacillus reuteri (strain DSM 20016) (Lactobacillus reuteri).